The chain runs to 716 residues: Phosphoribosylformylglycinamidine synthase subunit PurL (716 aa).

The active site involves His-34. Position 37 (Tyr-37) interacts with ATP. Position 78 (Glu-78) interacts with Mg(2+). Residues 79–82 (SHNH) and Arg-101 contribute to the substrate site. His-80 serves as the catalytic Proton acceptor. Asp-102 contacts Mg(2+). Gln-226 is a binding site for substrate. Asp-254 serves as a coordination point for Mg(2+). 298–300 (ESQ) contacts substrate. ATP is bound by residues Asp-474 and Gly-511. A Mg(2+)-binding site is contributed by Asn-512. Substrate is bound at residue Ser-514.

It belongs to the FGAMS family. In terms of assembly, monomer. Part of the FGAM synthase complex composed of 1 PurL, 1 PurQ and 2 PurS subunits.

It is found in the cytoplasm. It catalyses the reaction N(2)-formyl-N(1)-(5-phospho-beta-D-ribosyl)glycinamide + L-glutamine + ATP + H2O = 2-formamido-N(1)-(5-O-phospho-beta-D-ribosyl)acetamidine + L-glutamate + ADP + phosphate + H(+). It functions in the pathway purine metabolism; IMP biosynthesis via de novo pathway; 5-amino-1-(5-phospho-D-ribosyl)imidazole from N(2)-formyl-N(1)-(5-phospho-D-ribosyl)glycinamide: step 1/2. In terms of biological role, part of the phosphoribosylformylglycinamidine synthase complex involved in the purines biosynthetic pathway. Catalyzes the ATP-dependent conversion of formylglycinamide ribonucleotide (FGAR) and glutamine to yield formylglycinamidine ribonucleotide (FGAM) and glutamate. The FGAM synthase complex is composed of three subunits. PurQ produces an ammonia molecule by converting glutamine to glutamate. PurL transfers the ammonia molecule to FGAR to form FGAM in an ATP-dependent manner. PurS interacts with PurQ and PurL and is thought to assist in the transfer of the ammonia molecule from PurQ to PurL. The sequence is that of Phosphoribosylformylglycinamidine synthase subunit PurL from Methanobrevibacter smithii (strain ATCC 35061 / DSM 861 / OCM 144 / PS).